The chain runs to 92 residues: Small ribosomal subunit protein uS19c (92 aa).

This sequence belongs to the universal ribosomal protein uS19 family.

The protein localises to the plastid. The protein resides in the chloroplast. Its function is as follows. Protein S19 forms a complex with S13 that binds strongly to the 16S ribosomal RNA. This chain is Small ribosomal subunit protein uS19c, found in Platanus occidentalis (Sycamore).